The primary structure comprises 525 residues: Bifunctional purine biosynthesis protein PurH (525 aa).

In terms of domain architecture, MGS-like spans Met1–Thr145.

The protein belongs to the PurH family.

The enzyme catalyses (6R)-10-formyltetrahydrofolate + 5-amino-1-(5-phospho-beta-D-ribosyl)imidazole-4-carboxamide = 5-formamido-1-(5-phospho-D-ribosyl)imidazole-4-carboxamide + (6S)-5,6,7,8-tetrahydrofolate. It catalyses the reaction IMP + H2O = 5-formamido-1-(5-phospho-D-ribosyl)imidazole-4-carboxamide. Its pathway is purine metabolism; IMP biosynthesis via de novo pathway; 5-formamido-1-(5-phospho-D-ribosyl)imidazole-4-carboxamide from 5-amino-1-(5-phospho-D-ribosyl)imidazole-4-carboxamide (10-formyl THF route): step 1/1. It participates in purine metabolism; IMP biosynthesis via de novo pathway; IMP from 5-formamido-1-(5-phospho-D-ribosyl)imidazole-4-carboxamide: step 1/1. The sequence is that of Bifunctional purine biosynthesis protein PurH from Alcanivorax borkumensis (strain ATCC 700651 / DSM 11573 / NCIMB 13689 / SK2).